The sequence spans 391 residues: Ferrochelatase (391 aa).

2 residues coordinate Fe cation: His-196 and Glu-281.

The protein belongs to the ferrochelatase family.

The protein localises to the cytoplasm. The catalysed reaction is heme b + 2 H(+) = protoporphyrin IX + Fe(2+). It functions in the pathway porphyrin-containing compound metabolism; protoheme biosynthesis; protoheme from protoporphyrin-IX: step 1/1. Functionally, catalyzes the ferrous insertion into protoporphyrin IX. The polypeptide is Ferrochelatase (Parasynechococcus marenigrum (strain WH8102)).